Consider the following 87-residue polypeptide: Small ribosomal subunit protein bS20 (87 aa).

It belongs to the bacterial ribosomal protein bS20 family.

Its function is as follows. Binds directly to 16S ribosomal RNA. This chain is Small ribosomal subunit protein bS20, found in Shigella flexneri serotype 5b (strain 8401).